The following is a 520-amino-acid chain: Leucine carboxyl methyltransferase 1 (520 aa).

2 disordered regions span residues 1 to 116 (MQRD…DDAV) and 142 to 174 (TQEF…SIRR). The segment covering 79 to 89 (PSLRLSLGLPR) has biased composition (low complexity). Polar residues-rich tracts occupy residues 95–110 (HSGQ…STAR) and 142–151 (TQEFSSTLPS). Residues R185, G210, D237, 305-306 (DV), and E343 each bind S-adenosyl-L-methionine.

This sequence belongs to the methyltransferase superfamily. LCMT family.

The enzyme catalyses [phosphatase 2A protein]-C-terminal L-leucine + S-adenosyl-L-methionine = [phosphatase 2A protein]-C-terminal L-leucine methyl ester + S-adenosyl-L-homocysteine. In terms of biological role, methylates the carboxyl group of the C-terminal leucine residue of protein phosphatase 2A catalytic subunits to form alpha-leucine ester residues. The protein is Leucine carboxyl methyltransferase 1 (PPM1) of Mycosarcoma maydis (Corn smut fungus).